Here is a 662-residue protein sequence, read N- to C-terminus: UvrABC system protein B (662 aa).

The 158-residue stretch at 25–182 (KGIEKGEKFQ…KKLVEIQYER (158 aa)) folds into the Helicase ATP-binding domain. Residue 38 to 45 (GVTGSGKT) participates in ATP binding. Positions 91 to 114 (YYDYYQPEAYVAQSDTYIEKDASI) match the Beta-hairpin motif. Positions 429–595 (QIDDLYTSIQ…TIIKDIREVI (167 aa)) constitute a Helicase C-terminal domain. One can recognise a UVR domain in the interval 622 to 657 (DKLIEKYEEEMREAAQNLQFEKAAHLRDVIYKLKRD).

This sequence belongs to the UvrB family. As to quaternary structure, forms a heterotetramer with UvrA during the search for lesions. Interacts with UvrC in an incision complex.

Its subcellular location is the cytoplasm. In terms of biological role, the UvrABC repair system catalyzes the recognition and processing of DNA lesions. A damage recognition complex composed of 2 UvrA and 2 UvrB subunits scans DNA for abnormalities. Upon binding of the UvrA(2)B(2) complex to a putative damaged site, the DNA wraps around one UvrB monomer. DNA wrap is dependent on ATP binding by UvrB and probably causes local melting of the DNA helix, facilitating insertion of UvrB beta-hairpin between the DNA strands. Then UvrB probes one DNA strand for the presence of a lesion. If a lesion is found the UvrA subunits dissociate and the UvrB-DNA preincision complex is formed. This complex is subsequently bound by UvrC and the second UvrB is released. If no lesion is found, the DNA wraps around the other UvrB subunit that will check the other stand for damage. This chain is UvrABC system protein B, found in Clostridium botulinum (strain 657 / Type Ba4).